A 357-amino-acid polypeptide reads, in one-letter code: D-alanine--D-alanine ligase (357 aa).

Residues 145–339 enclose the ATP-grasp domain; that stretch reads KEVMLYHGIQ…YGDLVMDIVN (195 aa). Residue 172 to 225 coordinates ATP; the sequence is PFDFPVVVKPTSGGSSVGTHIIHNQEELESGLEDVFRFDNSAIVEEFTPGREFS. Positions 294, 306, and 308 each coordinate Mg(2+).

This sequence belongs to the D-alanine--D-alanine ligase family. The cofactor is Mg(2+). Mn(2+) serves as cofactor.

It localises to the cytoplasm. It catalyses the reaction 2 D-alanine + ATP = D-alanyl-D-alanine + ADP + phosphate + H(+). It participates in cell wall biogenesis; peptidoglycan biosynthesis. In terms of biological role, cell wall formation. This chain is D-alanine--D-alanine ligase, found in Lacticaseibacillus paracasei (strain ATCC 334 / BCRC 17002 / CCUG 31169 / CIP 107868 / KCTC 3260 / NRRL B-441) (Lactobacillus paracasei).